Here is a 257-residue protein sequence, read N- to C-terminus: MHVDVVSIFPEYFAPLDLSLIGRARASGTLRLAVHDLRAWTHDVHRTVDDTPYGGGPGMVMRPEPWGEALDALAPPGGTPPRLLVPTPAGVPFSQALAHELASESHLLFACGRYEGIDQRVLDHAASRMPVTEVSLGDYVLFGGEVAVLVILEAVTRLLPGVLGNVGSLDDESHAHGLLEAPMYTKPAAWRDREVPAVLRSGDHGKIARWRRNEALVRTVARRPDMIAALAPESLDPRDRAVLEGAGFSAPPGDVAE.

S-adenosyl-L-methionine-binding positions include G112 and 136 to 141; that span reads LGDYVL.

It belongs to the RNA methyltransferase TrmD family. Homodimer.

The protein resides in the cytoplasm. It carries out the reaction guanosine(37) in tRNA + S-adenosyl-L-methionine = N(1)-methylguanosine(37) in tRNA + S-adenosyl-L-homocysteine + H(+). Specifically methylates guanosine-37 in various tRNAs. The sequence is that of tRNA (guanine-N(1)-)-methyltransferase from Salinispora arenicola (strain CNS-205).